The chain runs to 921 residues: Isoleucine--tRNA ligase 1 (921 aa).

The 'HIGH' region signature appears at 57–67; it reads PYANGDIHMGH. Glu552 is a binding site for L-isoleucyl-5'-AMP. Residues 593–597 carry the 'KMSKS' region motif; that stretch reads KMSKS. Position 596 (Lys596) interacts with ATP. Cys888, Cys891, Cys908, and Cys911 together coordinate Zn(2+).

This sequence belongs to the class-I aminoacyl-tRNA synthetase family. IleS type 1 subfamily. Monomer. Zn(2+) is required as a cofactor.

The protein resides in the cytoplasm. The catalysed reaction is tRNA(Ile) + L-isoleucine + ATP = L-isoleucyl-tRNA(Ile) + AMP + diphosphate. Its function is as follows. Catalyzes the attachment of isoleucine to tRNA(Ile). As IleRS can inadvertently accommodate and process structurally similar amino acids such as valine, to avoid such errors it has two additional distinct tRNA(Ile)-dependent editing activities. One activity is designated as 'pretransfer' editing and involves the hydrolysis of activated Val-AMP. The other activity is designated 'posttransfer' editing and involves deacylation of mischarged Val-tRNA(Ile). The chain is Isoleucine--tRNA ligase 1 from Bacillus cereus (strain ATCC 10987 / NRS 248).